Reading from the N-terminus, the 346-residue chain is [LysW]-lysine/[LysW]-ornithine hydrolase (346 aa).

Residue H68 coordinates Zn(2+). D70 is a catalytic residue. D92 is a binding site for Zn(2+). E122 functions as the Proton acceptor in the catalytic mechanism. Residues E123, E146, and H317 each contribute to the Zn(2+) site.

Belongs to the peptidase M20A family. LysK subfamily. It depends on Zn(2+) as a cofactor. Co(2+) is required as a cofactor.

It localises to the cytoplasm. It catalyses the reaction [amino-group carrier protein]-C-terminal-gamma-(L-lysyl)-L-glutamate + H2O = [amino-group carrier protein]-C-terminal-L-glutamate + L-lysine. The enzyme catalyses [amino-group carrier protein]-C-terminal-gamma-(L-ornithyl)-L-glutamate + H2O = [amino-group carrier protein]-C-terminal-L-glutamate + L-ornithine. Its pathway is amino-acid biosynthesis; L-lysine biosynthesis via AAA pathway; L-lysine from L-alpha-aminoadipate (Thermus route): step 5/5. The protein operates within amino-acid biosynthesis; L-arginine biosynthesis. Functionally, catalyzes the release of L-lysine from [LysW]-gamma-L-lysine and the release of L-ornithine from [LysW]-L-ornithine. This is [LysW]-lysine/[LysW]-ornithine hydrolase from Saccharolobus islandicus (strain M.16.4 / Kamchatka #3) (Sulfolobus islandicus).